The sequence spans 185 residues: UPF0397 protein LGAS_1499 (185 aa).

Transmembrane regions (helical) follow at residues Gly6–Ala26, Phe46–Gly66, Thr78–Met98, Val118–Ile138, and Phe147–Ile167.

Belongs to the UPF0397 family.

The protein localises to the cell membrane. This Lactobacillus gasseri (strain ATCC 33323 / DSM 20243 / BCRC 14619 / CIP 102991 / JCM 1131 / KCTC 3163 / NCIMB 11718 / NCTC 13722 / AM63) protein is UPF0397 protein LGAS_1499.